Consider the following 393-residue polypeptide: Glycerol-3-phosphate dehydrogenase [NAD(+)] 1 (393 aa).

NAD(+)-binding positions include 45–50 (GSGNWG), Phe-133, Lys-157, and Ala-190. Lys-157 contacts substrate. Residue Lys-250 is the Proton acceptor of the active site. Arg-316 and Gln-345 together coordinate NAD(+). 316–317 (RN) is a substrate binding site.

The protein belongs to the NAD-dependent glycerol-3-phosphate dehydrogenase family.

The catalysed reaction is sn-glycerol 3-phosphate + NAD(+) = dihydroxyacetone phosphate + NADH + H(+). The sequence is that of Glycerol-3-phosphate dehydrogenase [NAD(+)] 1 (gpd1) from Cyberlindnera jadinii (Torula yeast).